The sequence spans 229 residues: Urease accessory protein UreF (229 aa).

Belongs to the UreF family. In terms of assembly, ureD, UreF and UreG form a complex that acts as a GTP-hydrolysis-dependent molecular chaperone, activating the urease apoprotein by helping to assemble the nickel containing metallocenter of UreC. The UreE protein probably delivers the nickel.

It localises to the cytoplasm. In terms of biological role, required for maturation of urease via the functional incorporation of the urease nickel metallocenter. This is Urease accessory protein UreF from Alcanivorax borkumensis (strain ATCC 700651 / DSM 11573 / NCIMB 13689 / SK2).